Here is a 160-residue protein sequence, read N- to C-terminus: Large ribosomal subunit protein uL15 (160 aa).

A compositionally biased stretch (polar residues) spans 1–14; sequence MKLNDISDNPGSSK. The segment at 1-35 is disordered; that stretch reads MKLNDISDNPGSSKSRMRVGRGIGSGKGKTCGRGV. A compositionally biased stretch (gly residues) spans 21 to 35; that stretch reads RGIGSGKGKTCGRGV.

Belongs to the universal ribosomal protein uL15 family. In terms of assembly, part of the 50S ribosomal subunit.

Functionally, binds to the 23S rRNA. The polypeptide is Large ribosomal subunit protein uL15 (Beijerinckia indica subsp. indica (strain ATCC 9039 / DSM 1715 / NCIMB 8712)).